Reading from the N-terminus, the 71-residue chain is Pro-glucagon (71 aa).

Belongs to the glucagon family.

The protein localises to the secreted. Its function is as follows. Plays a key role in glucose metabolism and homeostasis. Regulates blood glucose by increasing gluconeogenesis and decreasing glycolysis. In Ictalurus punctatus (Channel catfish), this protein is Pro-glucagon (gcg).